The chain runs to 194 residues: Peptidyl-tRNA hydrolase (194 aa).

Tyr16 provides a ligand contact to tRNA. His21 serves as the catalytic Proton acceptor. The tRNA site is built by Phe67, Asn69, and Asn115.

The protein belongs to the PTH family. As to quaternary structure, monomer.

Its subcellular location is the cytoplasm. The catalysed reaction is an N-acyl-L-alpha-aminoacyl-tRNA + H2O = an N-acyl-L-amino acid + a tRNA + H(+). Hydrolyzes ribosome-free peptidyl-tRNAs (with 1 or more amino acids incorporated), which drop off the ribosome during protein synthesis, or as a result of ribosome stalling. In terms of biological role, catalyzes the release of premature peptidyl moieties from peptidyl-tRNA molecules trapped in stalled 50S ribosomal subunits, and thus maintains levels of free tRNAs and 50S ribosomes. The polypeptide is Peptidyl-tRNA hydrolase (Salmonella agona (strain SL483)).